We begin with the raw amino-acid sequence, 768 residues long: UPF0313 protein VV2143 (768 aa).

Residues 363–640 (AYDMIKTSVN…LHKALLRYHD (278 aa)) enclose the Radical SAM core domain. Residues Cys377, Cys381, and Cys384 each contribute to the [4Fe-4S] cluster site. A disordered region spans residues 674–768 (DARTPAQRRK…GGRNQPSRAR (95 aa)). Residues 679–689 (AQRRKSGRHGA) are compositionally biased toward basic residues. Positions 719–731 (GGQSNSAPSRSGS) are enriched in polar residues.

It belongs to the UPF0313 family. It depends on [4Fe-4S] cluster as a cofactor.

The sequence is that of UPF0313 protein VV2143 from Vibrio vulnificus (strain YJ016).